Consider the following 71-residue polypeptide: Protein CYSTEINE-RICH TRANSMEMBRANE MODULE 3 (71 aa).

The tract at residues 30 to 49 (VMMKDSPQTVQPPHEGQSKG) is disordered. A helical transmembrane segment spans residues 48–64 (KGSGGFLRGCLAAMCCC).

The protein belongs to the CYSTM1 family. As to quaternary structure, heterodimers. Interacts with CYSTM7 and WIH1/CYSTM13. Mostly expressed in leaves and flowers and, to a lower extent, in stems, siliques, shoots and roots.

Its subcellular location is the cell membrane. The protein localises to the cytoplasm. It is found in the mitochondrion. Negatively regulates salt stress responses and Na(+) homeostasis. Prevents Na(+) efflux, disturbs reactive oxygen species (ROS) homeostasis, and represses the expression of nuclear salt stress-responsive genes. Involved in resistance to abiotic stress. The protein is Protein CYSTEINE-RICH TRANSMEMBRANE MODULE 3 of Arabidopsis thaliana (Mouse-ear cress).